Consider the following 416-residue polypeptide: Putative competence-damage inducible protein (416 aa).

It belongs to the CinA family.

The chain is Putative competence-damage inducible protein from Bacillus subtilis (strain 168).